The sequence spans 289 residues: NFIL3 like protein (289 aa).

The tract at residues Met1–Pro27 is disordered. One can recognise a bZIP domain in the interval Asp42 to Arg105. The basic motif stretch occupies residues Lys48–Arg64. The tract at residues Ile70 to Leu91 is leucine-zipper.

This sequence belongs to the bZIP family. NFIL3 subfamily.

Its subcellular location is the nucleus. This chain is NFIL3 like protein, found in Homo sapiens (Human).